The primary structure comprises 396 residues: Elongation factor Tu (396 aa).

The tr-type G domain maps to 10-206 (KPHCNIGTIG…TVDAYIPQPE (197 aa)). Positions 19-26 (GHVDHGKT) are G1. 19-26 (GHVDHGKT) is a GTP binding site. Threonine 26 serves as a coordination point for Mg(2+). A G2 region spans residues 60–64 (GITIS). Residues 81–84 (DCPG) are G3. Residues 81–85 (DCPGH) and 136–139 (NKVD) each bind GTP. Residues 136–139 (NKVD) are G4. Residues 174–176 (SAL) are G5.

Belongs to the TRAFAC class translation factor GTPase superfamily. Classic translation factor GTPase family. EF-Tu/EF-1A subfamily. In terms of assembly, monomer.

It localises to the cytoplasm. The enzyme catalyses GTP + H2O = GDP + phosphate + H(+). Functionally, GTP hydrolase that promotes the GTP-dependent binding of aminoacyl-tRNA to the A-site of ribosomes during protein biosynthesis. The polypeptide is Elongation factor Tu (Methylocella silvestris (strain DSM 15510 / CIP 108128 / LMG 27833 / NCIMB 13906 / BL2)).